The chain runs to 485 residues: Alpha-amylase (485 aa).

An N-terminal signal peptide occupies residues 1-18 (MQHLSILLVVLGSSIAFA). Gln-19 carries the post-translational modification Pyrrolidone carboxylic acid. Cys-46 and Cys-102 are joined by a disulfide. Ca(2+)-binding residues include Asn-116, Arg-163, and Asp-172. Cys-152 and Cys-165 form a disulfide bridge. Arg-200 is a chloride binding site. Asp-202 (nucleophile) is an active-site residue. His-206 lines the Ca(2+) pocket. Glu-238 serves as the catalytic Proton donor. Residue Asn-301 coordinates chloride. A disulfide bond links Cys-369 and Cys-375. 2 N-linked (GlcNAc...) asparagine glycosylation sites follow: Asn-423 and Asn-449. A disulfide bridge links Cys-440 with Cys-452.

It belongs to the glycosyl hydrolase 13 family. In terms of assembly, monomer. The cofactor is Ca(2+). Chloride serves as cofactor.

It carries out the reaction Endohydrolysis of (1-&gt;4)-alpha-D-glucosidic linkages in polysaccharides containing three or more (1-&gt;4)-alpha-linked D-glucose units.. Involved in the digestion of starch. The chain is Alpha-amylase from Hypothenemus hampei (Coffee berry borer).